A 271-amino-acid chain; its full sequence is Mannosyl-3-phosphoglycerate phosphatase (271 aa).

Residue aspartate 13 is the Nucleophile of the active site. Aspartate 13, aspartate 15, and aspartate 214 together coordinate Mg(2+).

It belongs to the HAD-like hydrolase superfamily. MPGP family. Mg(2+) serves as cofactor.

Its subcellular location is the cytoplasm. The enzyme catalyses 2-O-(alpha-D-mannosyl)-3-phosphoglycerate + H2O = (2R)-2-O-(alpha-D-mannosyl)-glycerate + phosphate. This is Mannosyl-3-phosphoglycerate phosphatase from Escherichia coli O139:H28 (strain E24377A / ETEC).